The sequence spans 228 residues: Uracil-DNA glycosylase (228 aa).

The Proton acceptor role is filled by Asp64.

The protein belongs to the uracil-DNA glycosylase (UDG) superfamily. UNG family.

It localises to the cytoplasm. It catalyses the reaction Hydrolyzes single-stranded DNA or mismatched double-stranded DNA and polynucleotides, releasing free uracil.. Its function is as follows. Excises uracil residues from the DNA which can arise as a result of misincorporation of dUMP residues by DNA polymerase or due to deamination of cytosine. The polypeptide is Uracil-DNA glycosylase (Yersinia enterocolitica serotype O:8 / biotype 1B (strain NCTC 13174 / 8081)).